Reading from the N-terminus, the 349-residue chain is MAFKIASSPHVTRNLHTSTVMQRVILCLLPGLVVQCAFFGWGTLVQVLLAIIVALSAEAVVMKLRQRSIKASLSDNSAMLTAILIGVAIPPLAPWWMIVIGTAFAIIIVKHLYGGLGHNLFNPAMAAYVLLLISFPVQMTTWIAPSTVAMHSPSVLDSLQLIFNIGANVNMDQFRLGIDGVAMATPLDTLKTDLSMGLTRTESMTKAIFDGATGVGWFWVNLAYLAGGLVLLKLKAIRWHISTGVLAGLFIASSVGFLLSPDTQGSPLFHLFSGATMLAAFFIATDPVTAATSPRGRIIFGTLIGILVYIIRTQGGYPDAFAFAVLLANLCAPFIDYYVRPRSYGHSAG.

The next 3 helical transmembrane spans lie at 37–57 (AFFG…ALSA), 73–90 (LSDN…VAIP), and 124–144 (AMAA…TWIA). The residue at position 185 (Thr185) is an FMN phosphoryl threonine. A run of 5 helical transmembrane segments spans residues 212 to 232 (ATGV…LVLL), 239 to 259 (WHIS…GFLL), 265 to 285 (GSPL…FIAT), 291 to 311 (ATSP…VYII), and 315 to 335 (GGYP…APFI).

It belongs to the NqrB/RnfD family. The complex is composed of six subunits: RnfA, RnfB, RnfC, RnfD, RnfE and RnfG. FMN is required as a cofactor.

It localises to the cell inner membrane. In terms of biological role, part of a membrane-bound complex that couples electron transfer with translocation of ions across the membrane. This Shewanella sp. (strain W3-18-1) protein is Ion-translocating oxidoreductase complex subunit D.